Consider the following 278-residue polypeptide: MTRDTIPLAGVIGDPISHSLSPRLHGHWLRRYGLQGHYVPLHVNHANLETVLRTLPLMGFVGVNVTLPHKEHVLSIADSVTDRAALIGAANTLTFTANEQIQADNTDGMGFLSNIRQALPGWSASAGPALVLGSGGAAKAIVSALVSDGAPVVHVANRTRARADGLKEQFGARVSPSDWTHIPDLIGDAALIVNTTSLGMAGQSPLSLDLSRLSPPTVVTDIVYAPLQTNLLRDASIRGCETVDGLGMLLHQAVPGFERWFNYTPTVDEDLREAVLAG.

Shikimate is bound by residues 19 to 21 (SLS) and Thr-66. The Proton acceptor role is filled by Lys-70. An NADP(+)-binding site is contributed by Asp-82. Shikimate contacts are provided by Asn-91 and Asp-107. NADP(+)-binding positions include 133–137 (GSGGA), 157–162 (NRTRAR), and Ile-222. Tyr-224 lines the shikimate pocket. Gly-245 contributes to the NADP(+) binding site.

The protein belongs to the shikimate dehydrogenase family. Homodimer.

It carries out the reaction shikimate + NADP(+) = 3-dehydroshikimate + NADPH + H(+). Its pathway is metabolic intermediate biosynthesis; chorismate biosynthesis; chorismate from D-erythrose 4-phosphate and phosphoenolpyruvate: step 4/7. Its function is as follows. Involved in the biosynthesis of the chorismate, which leads to the biosynthesis of aromatic amino acids. Catalyzes the reversible NADPH linked reduction of 3-dehydroshikimate (DHSA) to yield shikimate (SA). The polypeptide is Shikimate dehydrogenase (NADP(+)) (Jannaschia sp. (strain CCS1)).